The primary structure comprises 205 residues: Putative 3-methyladenine DNA glycosylase (205 aa).

It belongs to the DNA glycosylase MPG family.

This is Putative 3-methyladenine DNA glycosylase from Bacillus cereus (strain ATCC 14579 / DSM 31 / CCUG 7414 / JCM 2152 / NBRC 15305 / NCIMB 9373 / NCTC 2599 / NRRL B-3711).